A 496-amino-acid chain; its full sequence is D-2-hydroxyglutarate--pyruvate transhydrogenase DLD3 (496 aa).

Residue lysine 17 forms a Glycyl lysine isopeptide (Lys-Gly) (interchain with G-Cter in ubiquitin) linkage. An FAD-binding PCMH-type domain is found at 64–243 (YRGQSNLILL…TGVSIVAAAK (180 aa)).

Belongs to the FAD-binding oxidoreductase/transferase type 4 family. It depends on FAD as a cofactor.

It is found in the cytoplasm. It carries out the reaction (R)-lactate + 2 Fe(III)-[cytochrome c] = 2 Fe(II)-[cytochrome c] + pyruvate + 2 H(+). The catalysed reaction is (R)-2-hydroxyglutarate + pyruvate = (R)-lactate + 2-oxoglutarate. Catalyzes the reversible oxidation of (R)-2-hydroxyglutarate to 2-oxoglutarate coupled to reduction of pyruvate to (R)-lactate. Can also use oxaloacetate as electron acceptor instead of pyruvate producing (R)-malate. In Saccharomyces cerevisiae (strain ATCC 204508 / S288c) (Baker's yeast), this protein is D-2-hydroxyglutarate--pyruvate transhydrogenase DLD3 (DLD3).